The following is a 279-amino-acid chain: Tryptophan synthase alpha chain (279 aa).

Active-site proton acceptor residues include Glu-50 and Asp-61.

The protein belongs to the TrpA family. Tetramer of two alpha and two beta chains.

The catalysed reaction is (1S,2R)-1-C-(indol-3-yl)glycerol 3-phosphate + L-serine = D-glyceraldehyde 3-phosphate + L-tryptophan + H2O. The protein operates within amino-acid biosynthesis; L-tryptophan biosynthesis; L-tryptophan from chorismate: step 5/5. The alpha subunit is responsible for the aldol cleavage of indoleglycerol phosphate to indole and glyceraldehyde 3-phosphate. In Rhizobium meliloti (strain 1021) (Ensifer meliloti), this protein is Tryptophan synthase alpha chain.